A 218-amino-acid chain; its full sequence is 3-dehydroquinate dehydratase (218 aa).

3-dehydroquinate contacts are provided by residues 29–31 and R56; that span reads EFR. Residue H116 is the Proton donor/acceptor of the active site. The active-site Schiff-base intermediate with substrate is K142. Positions 180, 200, and 204 each coordinate 3-dehydroquinate.

Belongs to the type-I 3-dehydroquinase family. In terms of assembly, homodimer.

The catalysed reaction is 3-dehydroquinate = 3-dehydroshikimate + H2O. It functions in the pathway metabolic intermediate biosynthesis; chorismate biosynthesis; chorismate from D-erythrose 4-phosphate and phosphoenolpyruvate: step 3/7. Functionally, involved in the third step of the chorismate pathway, which leads to the biosynthesis of aromatic amino acids. Catalyzes the cis-dehydration of 3-dehydroquinate (DHQ) and introduces the first double bond of the aromatic ring to yield 3-dehydroshikimate. The protein is 3-dehydroquinate dehydratase of Methanococcus maripaludis (strain C7 / ATCC BAA-1331).